The primary structure comprises 404 residues: Glycerol-1-phosphate dehydrogenase [NAD(P)+] (404 aa).

NAD(+) contacts are provided by residues Asp55, 117-121 (GTVHD), and 139-142 (TAPS). Asp144 is a substrate binding site. Residue Ser148 participates in NAD(+) binding. Residue Asp191 coordinates substrate. 2 residues coordinate Ni(2+): Asp191 and His271. A substrate-binding site is contributed by His275. His291 is a binding site for Ni(2+).

This sequence belongs to the glycerol-1-phosphate dehydrogenase family. In terms of assembly, homodimer. It depends on Ni(2+) as a cofactor.

The protein localises to the cytoplasm. The catalysed reaction is sn-glycerol 1-phosphate + NAD(+) = dihydroxyacetone phosphate + NADH + H(+). It catalyses the reaction sn-glycerol 1-phosphate + NADP(+) = dihydroxyacetone phosphate + NADPH + H(+). Its function is as follows. Catalyzes the NAD(P)H-dependent reduction of dihydroxyacetonephosphate (DHAP or glycerone phosphate) to glycerol 1-phosphate (G1P). The G1P thus generated is probably used for the synthesis of phosphoglycerolipids in Gram-positive bacterial species. The sequence is that of Glycerol-1-phosphate dehydrogenase [NAD(P)+] from Geobacillus thermodenitrificans (strain NG80-2).